The chain runs to 354 residues: Photosystem II protein D1 2 (354 aa).

3 consecutive transmembrane segments (helical) span residues 29–46 (YIGW…TATT), 118–133 (HFLI…EWEL), and 142–156 (WIAV…AATA). Residue His118 coordinates chlorophyll a. Tyr126 provides a ligand contact to pheophytin a. 2 residues coordinate [CaMn4O5] cluster: Asp170 and Glu189. A helical membrane pass occupies residues 197–218 (FHQLGVAGVFGGALFSAMHGSL). A chlorophyll a-binding site is contributed by His198. A quinone contacts are provided by residues His215 and 264–265 (SF). His215 lines the Fe cation pocket. Fe cation is bound at residue His272. Residues 274 to 288 (FLAAWPVIGIWFTAL) form a helical membrane-spanning segment. [CaMn4O5] cluster-binding residues include His332, Glu333, Asp342, and Ala344. The propeptide occupies 345–354 (AVEVAPAVRG).

This sequence belongs to the reaction center PufL/M/PsbA/D family. As to quaternary structure, PSII is composed of 1 copy each of membrane proteins PsbA, PsbB, PsbC, PsbD, PsbE, PsbF, PsbH, PsbI, PsbJ, PsbK, PsbL, PsbM, PsbT, PsbX, PsbY, PsbZ, Psb30/Ycf12, peripheral proteins PsbO, CyanoQ (PsbQ), PsbU, PsbV and a large number of cofactors. It forms dimeric complexes. The D1/D2 heterodimer binds P680, chlorophylls that are the primary electron donor of PSII, and subsequent electron acceptors. It shares a non-heme iron and each subunit binds pheophytin, quinone, additional chlorophylls, carotenoids and lipids. D1 provides most of the ligands for the Mn4-Ca-O5 cluster of the oxygen-evolving complex (OEC). There is also a Cl(-1) ion associated with D1 and D2, which is required for oxygen evolution. The PSII complex binds additional chlorophylls, carotenoids and specific lipids. is required as a cofactor. Tyr-161 forms a radical intermediate that is referred to as redox-active TyrZ, YZ or Y-Z. In terms of processing, C-terminally processed by CtpA; processing is essential to allow assembly of the oxygen-evolving complex and thus photosynthetic growth.

The protein resides in the cellular thylakoid membrane. The catalysed reaction is 2 a plastoquinone + 4 hnu + 2 H2O = 2 a plastoquinol + O2. In terms of biological role, photosystem II (PSII) is a light-driven water:plastoquinone oxidoreductase that uses light energy to abstract electrons from H(2)O, generating O(2) and a proton gradient subsequently used for ATP formation. It consists of a core antenna complex that captures photons, and an electron transfer chain that converts photonic excitation into a charge separation. The D1/D2 (PsbA/PsbD) reaction center heterodimer binds P680, the primary electron donor of PSII as well as several subsequent electron acceptors. The polypeptide is Photosystem II protein D1 2 (Synechococcus sp. (strain JA-2-3B'a(2-13)) (Cyanobacteria bacterium Yellowstone B-Prime)).